The sequence spans 918 residues: Cell surface glycoprotein 1 (918 aa).

An N-terminal signal peptide occupies residues 1–34 (MTDTNEKIRSLFLTALMVFSVFAGTIAFSGGAAA). 7 N-linked (GlcNAc...) asparagine glycosylation sites follow: N37, N56, N110, N219, N250, N261, and N291. An N-linked (GalNAc...) asparagine glycan is attached at N306. N-linked (GlcNAc...) asparagine glycosylation is found at N318, N343, N392, N434, N487, N541, N555, N572, N585, N614, N715, N776, N836, and N845. Residues 815-894 (HQDTNGNEAY…DESETTAAEG (80 aa)) are disordered. Residues 833-846 (YTQNGSAVTDSANV) are compositionally biased toward polar residues. Residues 849–875 (VEEEQTEAPDTETETEAPDTETEEETD) are compositionally biased toward acidic residues. A helical membrane pass occupies residues 894 to 914 (GPGFTAAIALIALVAAALLAV). Positions 895-897 (PGF) match the PGF sorting signal motif.

Belongs to the halobacterial S-layer protein family. N-glycosylated on Asn-306; this N-linked glycan is a branched trisaccharide containing 2-amino-6-sulfo-2,6-dideoxy-glucose (sulfoquinovosamine). In terms of processing, cleaved by the archaeosortase ArtA at the C-terminus, with removal of a short hydrophobic segment. Post-translationally, lipidation.

It is found in the secreted. It localises to the cell wall. Its subcellular location is the S-layer. The protein resides in the cell membrane. In terms of biological role, S-layer protein. The S-layer is a paracrystalline mono-layered assembly of proteins which coat the surface of the cell. In H.hispanica, the S-layer contains two different glycoproteins, Slg1 and Slg2, which share highly similar amino acid sequences. The sequence is that of Cell surface glycoprotein 1 from Haloarcula hispanica (strain ATCC 33960 / DSM 4426 / JCM 8911 / NBRC 102182 / NCIMB 2187 / VKM B-1755).